Reading from the N-terminus, the 82-residue chain is Sulfur carrier protein TusA (82 aa).

Cysteine 19 (cysteine persulfide intermediate) is an active-site residue.

Belongs to the sulfur carrier protein TusA family.

The protein localises to the cytoplasm. Its function is as follows. Sulfur carrier protein which probably makes part of a sulfur-relay system. The polypeptide is Sulfur carrier protein TusA (Tolumonas auensis (strain DSM 9187 / NBRC 110442 / TA 4)).